We begin with the raw amino-acid sequence, 92 residues long: Actobindin-A (92 aa).

Disordered stretches follow at residues 1–33 and 54–92; these read MSAP…IGSD and LKHA…AADS. 2 consecutive WH2 domains span residues 3-20 and 40-57; these read APNP…LKHT and DHAS…LKHA. Basic and acidic residues-rich tracts occupy residues 13–33 and 54–64; these read KGAD…IGSD and LKHAETDDKSA. The segment covering 68 to 79 has biased composition (polar residues); that stretch reads NENTTIKPNNHS.

Monomer.

Functionally, is able to bind two actin monomers at high concentrations of G-actin. Inhibits actin polymerization by sequestering G-actin and stabilizing actin dimers. The polypeptide is Actobindin-A (abnA) (Dictyostelium discoideum (Social amoeba)).